Reading from the N-terminus, the 616-residue chain is D-glutamate cyclase, mitochondrial (616 aa).

The N-terminal 28 residues, 1–28 (MPFTLHLRSRLPSAIRSLILQKKPNIRN), are a transit peptide targeting the mitochondrion.

It belongs to the D-glutamate cyclase family.

It is found in the mitochondrion matrix. It catalyses the reaction D-glutamate = 5-oxo-D-proline + H2O. D-glutamate cyclase that converts D-glutamate to 5-oxo-D-proline. This is D-glutamate cyclase, mitochondrial from Homo sapiens (Human).